A 437-amino-acid chain; its full sequence is Elongation factor 1-gamma-B (437 aa).

The 86-residue stretch at 2–87 (AGGTLYTYPD…YVANDELRGS (86 aa)) folds into the GST N-terminal domain. A GST C-terminal domain is found at 89 to 222 (NRLHQAQVIQ…KMAQFDAKKF (134 aa)). Over residues 225 to 240 (VQPKKETPKKEKPAKE) the composition is skewed to basic and acidic residues. Positions 225–279 (VQPKKETPKKEKPAKEPKKKKKKKKKATPAPAPAPEDDLDESEKALAAEPKSKDP) are disordered. Residues 241–251 (PKKKKKKKKKA) show a composition bias toward basic residues. The span at 266–279 (SEKALAAEPKSKDP) shows a compositional bias: basic and acidic residues. The EF-1-gamma C-terminal domain maps to 276–437 (SKDPYAHLPK…KAFNQGKIFK (162 aa)).

As to quaternary structure, EF-1 is composed of four subunits: alpha, beta, delta, and gamma.

Its function is as follows. Probably plays a role in anchoring the complex to other cellular components. The chain is Elongation factor 1-gamma-B (eef1g-b) from Xenopus laevis (African clawed frog).